Reading from the N-terminus, the 81-residue chain is RNA-binding protein Hfq (81 aa).

The Sm domain occupies 10–69 (DPFLNTLRKEHVPVSIYLVNGIKLQGQVDSFDQYVILLKNTVTQMVYKHAISTIVPGRAV).

Belongs to the Hfq family. Homohexamer.

Its function is as follows. RNA chaperone that binds small regulatory RNA (sRNAs) and mRNAs to facilitate mRNA translational regulation in response to envelope stress, environmental stress and changes in metabolite concentrations. Also binds with high specificity to tRNAs. This Methylobacillus flagellatus (strain ATCC 51484 / DSM 6875 / VKM B-1610 / KT) protein is RNA-binding protein Hfq.